We begin with the raw amino-acid sequence, 300 residues long: Acetaldehyde dehydrogenase 3 (300 aa).

11–14 contacts NAD(+); the sequence is SGNI. C126 functions as the Acyl-thioester intermediate in the catalytic mechanism. NAD(+)-binding positions include 157–165 and N276; that span reads SAGPGTRAN.

Belongs to the acetaldehyde dehydrogenase family.

It carries out the reaction acetaldehyde + NAD(+) + CoA = acetyl-CoA + NADH + H(+). The polypeptide is Acetaldehyde dehydrogenase 3 (hsaG) (Rhodococcus jostii (strain RHA1)).